We begin with the raw amino-acid sequence, 500 residues long: Probable malate:quinone oxidoreductase (500 aa).

It belongs to the MQO family. FAD is required as a cofactor.

The catalysed reaction is (S)-malate + a quinone = a quinol + oxaloacetate. Its pathway is carbohydrate metabolism; tricarboxylic acid cycle; oxaloacetate from (S)-malate (quinone route): step 1/1. This Bacillus cereus (strain ZK / E33L) protein is Probable malate:quinone oxidoreductase.